Here is a 147-residue protein sequence, read N- to C-terminus: Biogenesis of lysosome-related organelles complex 1 subunit 1 (147 aa).

Disordered regions lie at residues 1 to 25 (MLTS…VRRK) and 125 to 147 (SSGA…PSAT).

It belongs to the BLOC1S1 family. As to quaternary structure, component of the biogenesis of lysosome-related organelles complex-1 (BLOC-1) composed of Blos1, Blos2, Blos3, Blos4, Dysb, Muted, Pldn and Snapin. Interacts with Pldn.

Its function is as follows. Component of the biogenesis of lysosome-related organelles complex-1 (BLOC-1) involved in pigment granule biogenesis and membrane trafficking in synapses. In response to high synaptic activity at neuromuscular junctions, stabilizes Pldn protein levels and, together with Pldn, plays a role in promoting efficient synaptic vesicle recycling and re-formation through early endosomes. This is Biogenesis of lysosome-related organelles complex 1 subunit 1 from Drosophila melanogaster (Fruit fly).